A 114-amino-acid polypeptide reads, in one-letter code: Lymphotactin (114 aa).

The first 21 residues, 1–21 (MRLLILALLGICSLTAYIVEG), serve as a signal peptide directing secretion. A disulfide bond links Cys-32 and Cys-69. The interval 91 to 114 (RNNMIQTKPTGTQQSTNTAVTLTG) is disordered.

It belongs to the intercrine gamma family. Highest level in spleen, lower in peripheral leukocytes and very low levels in lung, colon and small intestine.

It localises to the secreted. Chemotactic activity for lymphocytes but not for monocytes or neutrophils. In thymus, mediates medullary accumulation of thymic dendritic cells and contributes to regulatoy T cell development, playing a role in self-tolerance establishment. The polypeptide is Lymphotactin (XCL1) (Homo sapiens (Human)).